We begin with the raw amino-acid sequence, 130 residues long: MAENQYYGTGRRKSSSARVFIKPGSGNIVINKRSLEVYFGRETARMVVRQPLELVDMLGKLDLYITVKGGGISGQAGAIRHGITRALMAYDETLRSDLRKAGFVTRDAREVERKKVGLRKARRRPQFSKR.

The protein belongs to the universal ribosomal protein uS9 family.

This chain is Small ribosomal subunit protein uS9, found in Photorhabdus laumondii subsp. laumondii (strain DSM 15139 / CIP 105565 / TT01) (Photorhabdus luminescens subsp. laumondii).